Reading from the N-terminus, the 94-residue chain is Small ribosomal subunit protein uS19 (94 aa).

Residues 73-94 (EFAPTRTYRGHGKDAERTTRRR) are disordered. Over residues 83–94 (HGKDAERTTRRR) the composition is skewed to basic and acidic residues.

It belongs to the universal ribosomal protein uS19 family.

Its function is as follows. Protein S19 forms a complex with S13 that binds strongly to the 16S ribosomal RNA. The chain is Small ribosomal subunit protein uS19 from Thermomicrobium roseum (strain ATCC 27502 / DSM 5159 / P-2).